The following is a 346-amino-acid chain: Cobalt transport protein CbiM (346 aa).

An N-terminal signal peptide occupies residues 1–25 (MKRITLYAAGSAIIGAMLLAGPAHA). 8 helical membrane-spanning segments follow: residues 31 to 51 (GILP…FLAL), 68 to 88 (PLVG…IPVP), 101 to 121 (IAAI…ALLI), 133 to 153 (TLGA…WFVF), 159 to 179 (LGAG…WATY), 196 to 216 (FYPL…PLGV), 255 to 275 (ATVV…AGPS), and 312 to 332 (LLLF…GYFW).

It belongs to the CbiM family. As to quaternary structure, forms an energy-coupling factor (ECF) transporter complex composed of an ATP-binding protein (A component, CbiO), a transmembrane protein (T component, CbiQ) and 2 possible substrate-capture proteins (S components, CbiM and CbiN) of unknown stoichimetry.

It is found in the cell inner membrane. It functions in the pathway cofactor biosynthesis; adenosylcobalamin biosynthesis. Its function is as follows. Part of the energy-coupling factor (ECF) transporter complex CbiMNOQ involved in cobalt import. The chain is Cobalt transport protein CbiM from Geobacter sulfurreducens (strain ATCC 51573 / DSM 12127 / PCA).